A 105-amino-acid chain; its full sequence is Pyrimidine/purine nucleoside phosphorylase (105 aa).

Belongs to the nucleoside phosphorylase PpnP family.

The enzyme catalyses a purine D-ribonucleoside + phosphate = a purine nucleobase + alpha-D-ribose 1-phosphate. It carries out the reaction adenosine + phosphate = alpha-D-ribose 1-phosphate + adenine. The catalysed reaction is cytidine + phosphate = cytosine + alpha-D-ribose 1-phosphate. It catalyses the reaction guanosine + phosphate = alpha-D-ribose 1-phosphate + guanine. The enzyme catalyses inosine + phosphate = alpha-D-ribose 1-phosphate + hypoxanthine. It carries out the reaction thymidine + phosphate = 2-deoxy-alpha-D-ribose 1-phosphate + thymine. The catalysed reaction is uridine + phosphate = alpha-D-ribose 1-phosphate + uracil. It catalyses the reaction xanthosine + phosphate = alpha-D-ribose 1-phosphate + xanthine. Functionally, catalyzes the phosphorolysis of diverse nucleosides, yielding D-ribose 1-phosphate and the respective free bases. Can use uridine, adenosine, guanosine, cytidine, thymidine, inosine and xanthosine as substrates. Also catalyzes the reverse reactions. This Acidovorax ebreus (strain TPSY) (Diaphorobacter sp. (strain TPSY)) protein is Pyrimidine/purine nucleoside phosphorylase.